Consider the following 990-residue polypeptide: DNA ligase 4 (990 aa).

Residues 57 to 84 (TQKKGRQPPGPRRKAGPHGHSNLSPHEA) form a disordered region. Glu324, Lys326, Leu327, Arg331, Glu394, Phe436, Glu496, Lys501, Lys518, and Lys520 together coordinate ATP. Residue Lys326 is the N6-AMP-lysine intermediate of the active site. A Mg(2+)-binding site is contributed by Glu394. Glu496 is a binding site for Mg(2+). BRCT domains are found at residues 728–821 (PQSK…LPYL) and 900–989 (YMFS…RYQW).

It belongs to the ATP-dependent DNA ligase family. Mg(2+) is required as a cofactor.

It localises to the nucleus. The catalysed reaction is ATP + (deoxyribonucleotide)n-3'-hydroxyl + 5'-phospho-(deoxyribonucleotide)m = (deoxyribonucleotide)n+m + AMP + diphosphate.. Its function is as follows. DNA ligase involved in DNA non-homologous end joining (NHEJ); required for double-strand break (DSB) repair. This is DNA ligase 4 (LIG4) from Phaeosphaeria nodorum (strain SN15 / ATCC MYA-4574 / FGSC 10173) (Glume blotch fungus).